The following is a 664-amino-acid chain: Zinc finger protein 710 (664 aa).

Glycyl lysine isopeptide (Lys-Gly) (interchain with G-Cter in SUMO2) cross-links involve residues Lys110 and Lys113. Positions 121–141 (VYEVSVPGDDKDAGPAEAPAE) are disordered. 3 C2H2-type zinc fingers span residues 295–317 (WQCR…ILGH), 323–345 (HSCP…LLTH), and 351–373 (HKCQ…MLLH). Lys377 participates in a covalent cross-link: Glycyl lysine isopeptide (Lys-Gly) (interchain with G-Cter in SUMO2). 8 C2H2-type zinc fingers span residues 379 to 401 (YSCH…EVKH), 407 to 429 (HVCV…LASH), 435 to 457 (YQCL…MLKH), 463 to 485 (FVCT…SLTH), 491 to 513 (FKCE…MLIH), 519 to 541 (YQCH…MIVH), 547 to 569 (FKCK…MHLH), and 575 to 598 (FKCP…KVKH).

This sequence belongs to the krueppel C2H2-type zinc-finger protein family.

It is found in the nucleus. In terms of biological role, may be involved in transcriptional regulation. In Homo sapiens (Human), this protein is Zinc finger protein 710 (ZNF710).